The chain runs to 472 residues: Glutamate--tRNA ligase (472 aa).

A 'HIGH' region motif is present at residues 9–19 (PSPTGPLHIGS). Residues 237–241 (KLSKR) carry the 'KMSKS' region motif. Lys240 is an ATP binding site.

The protein belongs to the class-I aminoacyl-tRNA synthetase family. Glutamate--tRNA ligase type 1 subfamily. In terms of assembly, monomer.

It is found in the cytoplasm. The catalysed reaction is tRNA(Glu) + L-glutamate + ATP = L-glutamyl-tRNA(Glu) + AMP + diphosphate. In terms of biological role, catalyzes the attachment of glutamate to tRNA(Glu) in a two-step reaction: glutamate is first activated by ATP to form Glu-AMP and then transferred to the acceptor end of tRNA(Glu). The polypeptide is Glutamate--tRNA ligase (Buchnera aphidicola subsp. Baizongia pistaciae (strain Bp)).